The sequence spans 259 residues: Thiazole synthase (259 aa).

The active-site Schiff-base intermediate with DXP is lysine 99. 1-deoxy-D-xylulose 5-phosphate-binding positions include glycine 161, 187–188 (AG), and 209–210 (NT).

It belongs to the ThiG family. Homotetramer. Forms heterodimers with either ThiH or ThiS.

It is found in the cytoplasm. The catalysed reaction is [ThiS sulfur-carrier protein]-C-terminal-Gly-aminoethanethioate + 2-iminoacetate + 1-deoxy-D-xylulose 5-phosphate = [ThiS sulfur-carrier protein]-C-terminal Gly-Gly + 2-[(2R,5Z)-2-carboxy-4-methylthiazol-5(2H)-ylidene]ethyl phosphate + 2 H2O + H(+). It functions in the pathway cofactor biosynthesis; thiamine diphosphate biosynthesis. Catalyzes the rearrangement of 1-deoxy-D-xylulose 5-phosphate (DXP) to produce the thiazole phosphate moiety of thiamine. Sulfur is provided by the thiocarboxylate moiety of the carrier protein ThiS. In vitro, sulfur can be provided by H(2)S. This Sulfurimonas denitrificans (strain ATCC 33889 / DSM 1251) (Thiomicrospira denitrificans (strain ATCC 33889 / DSM 1251)) protein is Thiazole synthase.